Reading from the N-terminus, the 440-residue chain is Tyrosine--tRNA ligase (440 aa).

Tyrosine 46 contributes to the L-tyrosine binding site. Residues 51–60 carry the 'HIGH' region motif; it reads PTAASLHIGN. The L-tyrosine site is built by tyrosine 181 and glutamine 185. The short motif at 241–245 is the 'KMSKS' region element; sequence KFGKS. Lysine 244 lines the ATP pocket. In terms of domain architecture, S4 RNA-binding spans 373–439; the sequence is DRVIDAAQAA…GKKALGAVEN (67 aa).

The protein belongs to the class-I aminoacyl-tRNA synthetase family. TyrS type 1 subfamily. As to quaternary structure, homodimer.

Its subcellular location is the cytoplasm. It catalyses the reaction tRNA(Tyr) + L-tyrosine + ATP = L-tyrosyl-tRNA(Tyr) + AMP + diphosphate + H(+). Functionally, catalyzes the attachment of tyrosine to tRNA(Tyr) in a two-step reaction: tyrosine is first activated by ATP to form Tyr-AMP and then transferred to the acceptor end of tRNA(Tyr). This Bifidobacterium longum subsp. infantis (strain ATCC 15697 / DSM 20088 / JCM 1222 / NCTC 11817 / S12) protein is Tyrosine--tRNA ligase.